The following is a 134-amino-acid chain: Large ribosomal subunit protein eL14 (134 aa).

It belongs to the eukaryotic ribosomal protein eL14 family. As to quaternary structure, component of the large ribosomal subunit (LSU). Mature yeast ribosomes consist of a small (40S) and a large (60S) subunit. The 40S small subunit contains 1 molecule of ribosomal RNA (18S rRNA) and at least 33 different proteins. The large 60S subunit contains 3 rRNA molecules (25S, 5.8S and 5S rRNA) and at least 46 different proteins.

Its subcellular location is the cytoplasm. It localises to the nucleus. Functionally, component of the ribosome, a large ribonucleoprotein complex responsible for the synthesis of proteins in the cell. The small ribosomal subunit (SSU) binds messenger RNAs (mRNAs) and translates the encoded message by selecting cognate aminoacyl-transfer RNA (tRNA) molecules. The large subunit (LSU) contains the ribosomal catalytic site termed the peptidyl transferase center (PTC), which catalyzes the formation of peptide bonds, thereby polymerizing the amino acids delivered by tRNAs into a polypeptide chain. The nascent polypeptides leave the ribosome through a tunnel in the LSU and interact with protein factors that function in enzymatic processing, targeting, and the membrane insertion of nascent chains at the exit of the ribosomal tunnel. The polypeptide is Large ribosomal subunit protein eL14 (rpl14) (Schizosaccharomyces pombe (strain 972 / ATCC 24843) (Fission yeast)).